Consider the following 398-residue polypeptide: Phosphoglycerate kinase (398 aa).

Substrate-binding positions include 21 to 23 (DIN), arginine 37, 60 to 63 (HQGR), arginine 117, and arginine 157. ATP contacts are provided by residues glutamate 332 and 357–360 (GGDT).

This sequence belongs to the phosphoglycerate kinase family. In terms of assembly, monomer.

It localises to the cytoplasm. The enzyme catalyses (2R)-3-phosphoglycerate + ATP = (2R)-3-phospho-glyceroyl phosphate + ADP. It participates in carbohydrate degradation; glycolysis; pyruvate from D-glyceraldehyde 3-phosphate: step 2/5. This is Phosphoglycerate kinase from Halobacterium salinarum (strain ATCC 29341 / DSM 671 / R1).